A 289-amino-acid chain; its full sequence is 4-hydroxy-3-methylbut-2-enyl diphosphate reductase (289 aa).

Cys-12 is a [4Fe-4S] cluster binding site. (2E)-4-hydroxy-3-methylbut-2-enyl diphosphate-binding residues include His-41 and His-84. Dimethylallyl diphosphate-binding residues include His-41 and His-84. Isopentenyl diphosphate-binding residues include His-41 and His-84. [4Fe-4S] cluster is bound at residue Cys-106. A (2E)-4-hydroxy-3-methylbut-2-enyl diphosphate-binding site is contributed by His-134. A dimethylallyl diphosphate-binding site is contributed by His-134. His-134 provides a ligand contact to isopentenyl diphosphate. Glu-136 functions as the Proton donor in the catalytic mechanism. Ser-172 lines the (2E)-4-hydroxy-3-methylbut-2-enyl diphosphate pocket. [4Fe-4S] cluster is bound at residue Cys-200. (2E)-4-hydroxy-3-methylbut-2-enyl diphosphate is bound by residues Ser-229, Asn-231, and Ser-273. Ser-229, Asn-231, and Ser-273 together coordinate dimethylallyl diphosphate. Residues Ser-229, Asn-231, and Ser-273 each coordinate isopentenyl diphosphate.

The protein belongs to the IspH family. [4Fe-4S] cluster serves as cofactor.

It carries out the reaction isopentenyl diphosphate + 2 oxidized [2Fe-2S]-[ferredoxin] + H2O = (2E)-4-hydroxy-3-methylbut-2-enyl diphosphate + 2 reduced [2Fe-2S]-[ferredoxin] + 2 H(+). It catalyses the reaction dimethylallyl diphosphate + 2 oxidized [2Fe-2S]-[ferredoxin] + H2O = (2E)-4-hydroxy-3-methylbut-2-enyl diphosphate + 2 reduced [2Fe-2S]-[ferredoxin] + 2 H(+). It participates in isoprenoid biosynthesis; dimethylallyl diphosphate biosynthesis; dimethylallyl diphosphate from (2E)-4-hydroxy-3-methylbutenyl diphosphate: step 1/1. The protein operates within isoprenoid biosynthesis; isopentenyl diphosphate biosynthesis via DXP pathway; isopentenyl diphosphate from 1-deoxy-D-xylulose 5-phosphate: step 6/6. Catalyzes the conversion of 1-hydroxy-2-methyl-2-(E)-butenyl 4-diphosphate (HMBPP) into a mixture of isopentenyl diphosphate (IPP) and dimethylallyl diphosphate (DMAPP). Acts in the terminal step of the DOXP/MEP pathway for isoprenoid precursor biosynthesis. The protein is 4-hydroxy-3-methylbut-2-enyl diphosphate reductase of Opitutus terrae (strain DSM 11246 / JCM 15787 / PB90-1).